The primary structure comprises 455 residues: Ribulose bisphosphate carboxylase large chain (455 aa).

N6,N6,N6-trimethyllysine is present on K5. Substrate contacts are provided by N114 and T164. The Proton acceptor role is filled by K166. K168 provides a ligand contact to substrate. K192, D194, and E195 together coordinate Mg(2+). N6-carboxylysine is present on K192. The Proton acceptor role is filled by H285. Substrate is bound by residues R286, H318, and S370.

It belongs to the RuBisCO large chain family. Type I subfamily. Heterohexadecamer of 8 large chains and 8 small chains. Requires Mg(2+) as cofactor.

The protein localises to the plastid. It localises to the chloroplast. It carries out the reaction 2 (2R)-3-phosphoglycerate + 2 H(+) = D-ribulose 1,5-bisphosphate + CO2 + H2O. It catalyses the reaction D-ribulose 1,5-bisphosphate + O2 = 2-phosphoglycolate + (2R)-3-phosphoglycerate + 2 H(+). Functionally, ruBisCO catalyzes two reactions: the carboxylation of D-ribulose 1,5-bisphosphate, the primary event in carbon dioxide fixation, as well as the oxidative fragmentation of the pentose substrate in the photorespiration process. Both reactions occur simultaneously and in competition at the same active site. The sequence is that of Ribulose bisphosphate carboxylase large chain from Tamarindus indica (Tamarind).